A 314-amino-acid polypeptide reads, in one-letter code: Methionyl-tRNA formyltransferase (314 aa).

Serine 110–proline 113 provides a ligand contact to (6S)-5,6,7,8-tetrahydrofolate.

Belongs to the Fmt family.

It carries out the reaction L-methionyl-tRNA(fMet) + (6R)-10-formyltetrahydrofolate = N-formyl-L-methionyl-tRNA(fMet) + (6S)-5,6,7,8-tetrahydrofolate + H(+). Functionally, attaches a formyl group to the free amino group of methionyl-tRNA(fMet). The formyl group appears to play a dual role in the initiator identity of N-formylmethionyl-tRNA by promoting its recognition by IF2 and preventing the misappropriation of this tRNA by the elongation apparatus. The protein is Methionyl-tRNA formyltransferase of Lactobacillus acidophilus (strain ATCC 700396 / NCK56 / N2 / NCFM).